The sequence spans 156 residues: Small ribosomal subunit protein uS7 (156 aa).

The protein belongs to the universal ribosomal protein uS7 family. In terms of assembly, part of the 30S ribosomal subunit. Contacts proteins S9 and S11.

Its function is as follows. One of the primary rRNA binding proteins, it binds directly to 16S rRNA where it nucleates assembly of the head domain of the 30S subunit. Is located at the subunit interface close to the decoding center, probably blocks exit of the E-site tRNA. This Clostridium tetani (strain Massachusetts / E88) protein is Small ribosomal subunit protein uS7.